The following is a 303-amino-acid chain: UDP-N-acetylenolpyruvoylglucosamine reductase (303 aa).

The region spanning 29-196 (KIGGPADILI…LEAVLQLEQK (168 aa)) is the FAD-binding PCMH-type domain. The active site involves Arg-174. Ser-225 acts as the Proton donor in catalysis. Glu-295 is a catalytic residue.

It belongs to the MurB family. FAD serves as cofactor.

It is found in the cytoplasm. The enzyme catalyses UDP-N-acetyl-alpha-D-muramate + NADP(+) = UDP-N-acetyl-3-O-(1-carboxyvinyl)-alpha-D-glucosamine + NADPH + H(+). It participates in cell wall biogenesis; peptidoglycan biosynthesis. Functionally, cell wall formation. The protein is UDP-N-acetylenolpyruvoylglucosamine reductase of Bacillus velezensis (strain DSM 23117 / BGSC 10A6 / LMG 26770 / FZB42) (Bacillus amyloliquefaciens subsp. plantarum).